A 739-amino-acid polypeptide reads, in one-letter code: Nuclear pore complex protein NUP62 (739 aa).

19 repeat units span residues 6-7 (FG), 17-18 (FG), 50-51 (FG), 52-53 (FG), 68-69 (FG), 70-71 (FG), 78-79 (FG), 80-81 (FG), 91-92 (FG), 93-94 (FG), 108-109 (FG), 110-111 (FG), 124-125 (FG), 141-142 (FG), 159-160 (FG), 174-175 (FG), 186-187 (FG), 207-208 (FG), and 221-222 (FG). The segment at 6–450 (FGQSNSVGGF…AATFSTTGFG (445 aa)) is 26 X 2 AA repeats of F-G. The interval 18-67 (GSSSATNSSSASSTTSPLSFSFNQSSNPSSTGFGFGSSVSSTPASSTTPS) is disordered. Over residues 79–218 (GFGSSASSST…ASSSAATSTS (140 aa)) the composition is skewed to low complexity. The interval 79–245 (GFGSSASSST…VASSAPGSSS (167 aa)) is disordered. Low complexity predominate over residues 232–245 (PSFSVASSAPGSSS). A run of 5 repeats spans residues 248–249 (FG), 271–272 (FG), 280–281 (FG), 308–309 (FG), and 366–367 (FG). Disordered regions lie at residues 281-329 (GSSS…ASPF), 341-366 (TASSTTSSTTPSAPPQTASSSSSFSF), and 399-418 (TTTSSSTPAATSAPASSAPA). Repeat copies occupy residues 426 to 427 (FG) and 449 to 450 (FG). The disordered stretch occupies residues 471–533 (KTSTPASSSQ…AVAPVAGSPK (63 aa)). Positions 472 to 519 (TSTPASSSQPQTTSPAFSFSLPSSTSTTAPATSSATTTQTTLVVPSSS) are enriched in low complexity. Residues 584 to 674 (RLEIEVAKVV…IRSIIQSVNA (91 aa)) are a coiled coil.

This sequence belongs to the nucleoporin NSP1/NUP62 family. As to quaternary structure, part of the nuclear pore complex (NPC). The NPC has an eight-fold symmetrical structure comprising a central transport channel and two rings, the cytoplasmic and nuclear rings, to which eight filaments are attached. The cytoplasmic filaments have loose ends, while the nuclear filaments are joined in a distal ring, forming a nuclear basket. NPCs are highly dynamic in configuration and composition, and can be devided in 3 subcomplexes, the NUP62 subcomplex, the NUP107-160 subcomplex and the NUP93 subcomplex, containing approximately 30 different nucleoporin proteins. Interacts with NUP58 and the importin KPNB1.

The protein resides in the nucleus envelope. The protein localises to the nucleus. It is found in the nuclear pore complex. In Arabidopsis thaliana (Mouse-ear cress), this protein is Nuclear pore complex protein NUP62.